A 609-amino-acid polypeptide reads, in one-letter code: NADH-ubiquinone oxidoreductase chain 5 (609 aa).

16 helical membrane passes run 3–23, 41–61, 90–110, 115–135, 140–160, 174–194, 214–236, 244–264, 276–296, 304–323, 328–350, 368–388, 410–432, 460–480, 491–511, and 585–605; these read VINL…LPIV, TAIS…IYSG, MIFV…SMWY, PFIN…MILV, LFQL…LIGW, AVLY…WFLI, VPLM…HPWL, TPVS…FLLI, MQTT…ICAL, IIAF…IGIN, AFLH…GSII, VLPF…GMPF, WALL…IMFF, LLLG…PTST, LMAL…NLTS, and GLIK…LMMI.

This sequence belongs to the complex I subunit 5 family. As to quaternary structure, core subunit of respiratory chain NADH dehydrogenase (Complex I) which is composed of 45 different subunits.

It localises to the mitochondrion inner membrane. The enzyme catalyses a ubiquinone + NADH + 5 H(+)(in) = a ubiquinol + NAD(+) + 4 H(+)(out). Its function is as follows. Core subunit of the mitochondrial membrane respiratory chain NADH dehydrogenase (Complex I) which catalyzes electron transfer from NADH through the respiratory chain, using ubiquinone as an electron acceptor. Essential for the catalytic activity and assembly of complex I. This is NADH-ubiquinone oxidoreductase chain 5 (MT-ND5) from Halichoerus grypus (Gray seal).